The following is a 374-amino-acid chain: Translocating chain-associated membrane protein 1 (374 aa).

Over 2–29 the chain is Cytoplasmic; the sequence is AIRKKSTKSPPVLSHEFILQNHADIVSC. The chain crosses the membrane as a helical span at residues 30 to 50; sequence VAMVFLLGLMFEITAKASIIF. At 51–76 the chain is on the lumenal side; it reads VTLQYNVTLPATEEQATESTSLYYYG. N-linked (GlcNAc...) asparagine glycosylation occurs at asparagine 56. A helical transmembrane segment spans residues 77–97; the sequence is IKDLATVFFYMLVAIIIHAII. Over 98-121 the chain is Cytoplasmic; sequence QEYVLDKINRRMHFSKTKHSKFNE. A TLC domain is found at 117–326; the sequence is SKFNESGQLS…NFQLRRWREH (210 aa). Residues 122–142 traverse the membrane as a helical segment; that stretch reads SGQLSAFYLFSCIWGTFILIS. Topologically, residues 143–159 are lumenal; the sequence is ENYISDPTILWRAYPHN. A helical membrane pass occupies residues 160–180; it reads LMTFQMKFFYIAQLAYWFHAF. At 181–192 the chain is on the cytoplasmic side; sequence PELYFQKTKKED. The helical transmembrane segment at 193–213 threads the bilayer; the sequence is IPRQLVYIGLYLFHIAGAYLL. Residues 214-217 lie on the Lumenal side of the membrane; sequence NLNH. The helical transmembrane segment at 218-238 threads the bilayer; it reads LGLVLLVLHYFVEFLFHISRL. Topologically, residues 239-251 are cytoplasmic; it reads FYFSDEKYQKGFS. Residues 252-272 traverse the membrane as a helical segment; sequence LWAVLFVLGRLLTLILSVLTV. The Lumenal segment spans residues 273–297; the sequence is GFGLARAENQKLDFSAGNFNVLAVR. The chain crosses the membrane as a helical span at residues 298-318; that stretch reads IAVLASICITQAFMMWKFINF. At 319 to 374 the chain is on the cytoplasmic side; sequence QLRRWREHSTFQAPVVKKKPTVTKGRSSRKGTENGVNGTVTSNGADSPRNRKEKSS. The segment covering 334–347 has biased composition (basic residues); the sequence is VKKKPTVTKGRSSR. Positions 334–374 are disordered; the sequence is VKKKPTVTKGRSSRKGTENGVNGTVTSNGADSPRNRKEKSS. Residues 352 to 363 are compositionally biased toward polar residues; sequence NGVNGTVTSNGA. Position 365 is a phosphoserine (serine 365).

This sequence belongs to the TRAM family. Interacts with SEC61B. May interact with Derlin-1/DERL1. N-glycosylated.

The protein resides in the endoplasmic reticulum membrane. Its function is as follows. Involved in the translocation of nascent protein chains into or through the endoplasmic reticulum (ER) membrane by facilitating the proper chain positioning at the SEC61 channel. Regulates the exposure of nascent secretory protein chain to the cytosol during translocation into the ER. May affect the phospholipid bilayer in the vicinity of the lateral gate of the SEC61 channel, thereby facilitating ER protein transport. Intimately associates with transmembrane (TM) domain of nascent membrane proteins during the entire integration process into the ER membrane. Associates with the second TM domain of G-protein-coupled receptor opsin/OPSD nascent chain in the ER membrane, which may facilitate its integration into the membrane. Under conditions of ER stress, participates in the disposal of misfolded ER membrane proteins during the unfolded protein response (UPR), an integrated stress response (ISR) pathway, by selectively retrotranslocating misfolded ER-membrane proteins from the ER into the cytosol where they are ubiquitinated and degraded by the proteasome. The sequence is that of Translocating chain-associated membrane protein 1 (TRAM1) from Canis lupus familiaris (Dog).